We begin with the raw amino-acid sequence, 205 residues long: Cytochrome c biogenesis ATP-binding export protein CcmA 1 (205 aa).

The ABC transporter domain maps to 2-205 (LEARDLYCER…LALTGGGAGL (204 aa)). 34-41 (GGNGAGKT) contributes to the ATP binding site.

It belongs to the ABC transporter superfamily. CcmA exporter (TC 3.A.1.107) family. As to quaternary structure, the complex is composed of two ATP-binding proteins (CcmA) and two transmembrane proteins (CcmB).

The protein resides in the cell inner membrane. The catalysed reaction is heme b(in) + ATP + H2O = heme b(out) + ADP + phosphate + H(+). In terms of biological role, part of the ABC transporter complex CcmAB involved in the biogenesis of c-type cytochromes; once thought to export heme, this seems not to be the case, but its exact role is uncertain. Responsible for energy coupling to the transport system. The chain is Cytochrome c biogenesis ATP-binding export protein CcmA 1 from Salmonella typhimurium (strain LT2 / SGSC1412 / ATCC 700720).